We begin with the raw amino-acid sequence, 289 residues long: E3 ubiquitin-protein ligase MARCHF1 (289 aa).

Residues 1-66 (MLGWCEAIAR…SPTTGTAPRS (66 aa)) are responsible for low stability. The segment at 13 to 69 (HRIPNNTRTPEISGDLADASQTSTLNEKSPGRSASRSSNISKASSPTTGTAPRSQSR) is disordered. Positions 43–58 (GRSASRSSNISKASSP) are enriched in low complexity. Residues 59 to 69 (TTGTAPRSQSR) are compositionally biased toward polar residues. An RING-CH-type zinc finger spans residues 72–133 (VCPSTQDICR…ELCKYDFIME (62 aa)). Zn(2+) is bound by residues C80, C83, C97, C99, H107, C110, C123, and C126. 2 consecutive transmembrane segments (helical) span residues 155–175 (IFCS…SLYV) and 197–217 (FWTK…FMYV). The interval 222–279 (YVQLWRRLKAYNRVIFVQNCPDTAKKLEKNFSCNVNTDIKDAVVVPVPQTGANSLPSA) is responsible for down-regulation of CD86 and MHC class II cell surface expression.

Interacts with CD83; this interaction antagonizes MARCHF1-mediated MHC II and CD86 down-regulation. Ubiquitinated via ubiquitin-conjugating enzyme E2 D1/UBE2D1 independently of lysines, leading to proteolytic degradation. Post-translationally, has a short half-life. Instability/short half-life permits rapid changes that allow efficient induction of antigen presentation once antigen presenting cells, APCs, receive maturation signals. Small changes in protein levels significantly alter the cell surface display of MHC class II proteins. As to expression, expressed in antigen presenting cells, APCs, located in lymph nodes and spleen. Also expressed in lung. Expression is high in follicular B-cells, moderate in dendritic cells and low in splenic T-cells.

It localises to the golgi apparatus. The protein localises to the trans-Golgi network membrane. It is found in the lysosome membrane. The protein resides in the cytoplasmic vesicle membrane. Its subcellular location is the late endosome membrane. It localises to the early endosome membrane. The protein localises to the cell membrane. It carries out the reaction S-ubiquitinyl-[E2 ubiquitin-conjugating enzyme]-L-cysteine + [acceptor protein]-L-lysine = [E2 ubiquitin-conjugating enzyme]-L-cysteine + N(6)-ubiquitinyl-[acceptor protein]-L-lysine.. The protein operates within protein modification; protein ubiquitination. Its function is as follows. E3 ubiquitin-protein ligase that mediates ubiquitination of TFRC, CD86, FAS and MHC class II proteins, such as HLA-DR alpha and beta, and promotes their subsequent endocytosis and sorting to lysosomes via multivesicular bodies. By constitutively ubiquitinating MHC class II proteins in immature dendritic cells, down-regulates their cell surface localization thus sequestering them in the intracellular endosomal system. Also regulates insulin sensitivity by controlling surface expression of the insulin receptor subunit beta/INSR by direct ubiquitination and degradation. (Microbial infection) Plays a role in iron metabolism by regulating the levels of the transferrin receptor TFRC during human cytomegalovirus infection, subsequently contributing to a proviral effect. The protein is E3 ubiquitin-protein ligase MARCHF1 of Homo sapiens (Human).